We begin with the raw amino-acid sequence, 327 residues long: uncharacterized protein (327 aa).

One can recognise an S4 RNA-binding domain in the interval 12 to 79 (KRIDEFLAKE…LKKELDLEIE (68 aa)). Aspartate 136 is an active-site residue.

This sequence belongs to the pseudouridine synthase RluA family.

It carries out the reaction a uridine in RNA = a pseudouridine in RNA. This is an uncharacterized protein from Helicobacter pylori (strain J99 / ATCC 700824) (Campylobacter pylori J99).